Reading from the N-terminus, the 237-residue chain is ATP synthase subunit 4, mitochondrial (237 aa).

The transit peptide at 1–30 (MFRALTLKASARPVVAGLCSRQAPIAAVRY) directs the protein to the mitochondrion.

This sequence belongs to the eukaryotic ATPase B chain family.

It is found in the mitochondrion. The protein localises to the mitochondrion inner membrane. Functionally, mitochondrial membrane ATP synthase (F(1)F(0) ATP synthase or Complex V) produces ATP from ADP in the presence of a proton gradient across the membrane which is generated by electron transport complexes of the respiratory chain. F-type ATPases consist of two structural domains, F(1) - containing the extramembraneous catalytic core, and F(0) - containing the membrane proton channel, linked together by a central stalk and a peripheral stalk. During catalysis, ATP synthesis in the catalytic domain of F(1) is coupled via a rotary mechanism of the central stalk subunits to proton translocation. Part of the complex F(0) domain and the peripheric stalk, which acts as a stator to hold the catalytic alpha(3)beta(3) subcomplex and subunit a/ATP6 static relative to the rotary elements. The polypeptide is ATP synthase subunit 4, mitochondrial (ATP4) (Kluyveromyces lactis (strain ATCC 8585 / CBS 2359 / DSM 70799 / NBRC 1267 / NRRL Y-1140 / WM37) (Yeast)).